The sequence spans 402 residues: Imidazolonepropionase (402 aa).

Fe(3+) contacts are provided by H69 and H71. Residues H69 and H71 each coordinate Zn(2+). 4-imidazolone-5-propanoate contacts are provided by R78, Y141, and H174. Residue Y141 participates in N-formimidoyl-L-glutamate binding. H239 contacts Fe(3+). Position 239 (H239) interacts with Zn(2+). 4-imidazolone-5-propanoate is bound at residue Q242. Residue D314 participates in Fe(3+) binding. D314 contributes to the Zn(2+) binding site. 2 residues coordinate N-formimidoyl-L-glutamate: N316 and G318. T319 lines the 4-imidazolone-5-propanoate pocket.

It belongs to the metallo-dependent hydrolases superfamily. HutI family. Requires Zn(2+) as cofactor. The cofactor is Fe(3+).

Its subcellular location is the cytoplasm. The catalysed reaction is 4-imidazolone-5-propanoate + H2O = N-formimidoyl-L-glutamate. It functions in the pathway amino-acid degradation; L-histidine degradation into L-glutamate; N-formimidoyl-L-glutamate from L-histidine: step 3/3. Its function is as follows. Catalyzes the hydrolytic cleavage of the carbon-nitrogen bond in imidazolone-5-propanoate to yield N-formimidoyl-L-glutamate. It is the third step in the universal histidine degradation pathway. The polypeptide is Imidazolonepropionase (Maricaulis maris (strain MCS10) (Caulobacter maris)).